The primary structure comprises 265 residues: Neuronal membrane glycoprotein M6-b (265 aa).

A helical membrane pass occupies residues 31 to 51 (GGVPYASLVATILCFSGVALF). N-linked (GlcNAc...) asparagine glycosylation is present at Asn73. The next 2 helical transmembrane spans lie at 90–110 (VIYG…AEGF) and 136–156 (FVFL…FSAV). N-linked (GlcNAc...) asparagine glycosylation occurs at Asn177. A helical transmembrane segment spans residues 224-244 (LFIVACAGAGATVIALLIYMM). Position 257 is a phosphoserine (Ser257).

The protein belongs to the myelin proteolipid protein family. As to quaternary structure, interacts with SERT. Highly expressed in the ventral medullary surface, moderately in the cerebral cortex and cerebellum, poorly in lung and kidney, and not at all in heart, skeletal muscle, liver, stomach or stomach.

It localises to the membrane. The protein localises to the cell membrane. May be involved in neural development. Involved in regulation of osteoblast function and bone formation. Involved in matrix vesicle release by osteoblasts; this function seems to involve maintenance of the actin cytoskeleton. May be involved in cellular trafficking of SERT and thereby in regulation of serotonin uptake. The protein is Neuronal membrane glycoprotein M6-b (Gpm6b) of Rattus norvegicus (Rat).